Consider the following 322-residue polypeptide: uncharacterized protein (322 aa).

This is an uncharacterized protein from Acanthamoeba polyphaga mimivirus (APMV).